A 95-amino-acid polypeptide reads, in one-letter code: Aspartyl/glutamyl-tRNA(Asn/Gln) amidotransferase subunit C (95 aa).

The protein belongs to the GatC family. Heterotrimer of A, B and C subunits.

It catalyses the reaction L-glutamyl-tRNA(Gln) + L-glutamine + ATP + H2O = L-glutaminyl-tRNA(Gln) + L-glutamate + ADP + phosphate + H(+). It carries out the reaction L-aspartyl-tRNA(Asn) + L-glutamine + ATP + H2O = L-asparaginyl-tRNA(Asn) + L-glutamate + ADP + phosphate + 2 H(+). In terms of biological role, allows the formation of correctly charged Asn-tRNA(Asn) or Gln-tRNA(Gln) through the transamidation of misacylated Asp-tRNA(Asn) or Glu-tRNA(Gln) in organisms which lack either or both of asparaginyl-tRNA or glutaminyl-tRNA synthetases. The reaction takes place in the presence of glutamine and ATP through an activated phospho-Asp-tRNA(Asn) or phospho-Glu-tRNA(Gln). This is Aspartyl/glutamyl-tRNA(Asn/Gln) amidotransferase subunit C from Ruegeria sp. (strain TM1040) (Silicibacter sp.).